We begin with the raw amino-acid sequence, 210 residues long: MDNLNVFANEDNQVNGLKRPPPSRVCPRCDSDNTKFCFYNNYSESQPRYFCKNCRRYWTHGGALRNIPVGGSCRKPKRLKVDQSSISEMVSVENQPINHQSFRQTQENNEFVRSFDASSSATVTAVPNHFGYLSELHGVTNLLPIQSFRTMDCLDFGDESFQQGYYDVGSNDLIDNPLINQSIGGYVDNLTSYCINQVEPKLQPRYEHES.

Residues 24–78 (RVCPRCDSDNTKFCFYNNYSESQPRYFCKNCRRYWTHGGALRNIPVGGSCRKPKR) form a Dof-type zinc finger. Residues C26, C29, C51, and C54 each coordinate Zn(2+).

It localises to the nucleus. Transcription factor that binds specifically to a 5'-AA[AG]G-3' consensus core sequence. The chain is Dof zinc finger protein DOF4.4 (DOF4.4) from Arabidopsis thaliana (Mouse-ear cress).